The primary structure comprises 499 residues: Alpha-amylase 3 (499 aa).

Positions 127 and 183 each coordinate Ca(2+). Catalysis depends on Asp-213, which acts as the Nucleophile. His-217 serves as a coordination point for Ca(2+). Residue Glu-248 is the Proton donor of the active site.

The protein belongs to the glycosyl hydrolase 13 family. Monomer. Requires Ca(2+) as cofactor.

It localises to the cytoplasm. The catalysed reaction is Endohydrolysis of (1-&gt;4)-alpha-D-glucosidic linkages in polysaccharides containing three or more (1-&gt;4)-alpha-linked D-glucose units.. The protein is Alpha-amylase 3 (amyC) of Dictyoglomus thermophilum (strain ATCC 35947 / DSM 3960 / H-6-12).